Here is a 215-residue protein sequence, read N- to C-terminus: 3,4-dihydroxy-2-butanone 4-phosphate synthase (215 aa).

Residues 37–38, Asp42, 150–154, and Glu175 contribute to the D-ribulose 5-phosphate site; these read RE and RRGHT. Glu38 is a binding site for Mg(2+). His153 contributes to the Mg(2+) binding site.

This sequence belongs to the DHBP synthase family. Homodimer. Requires Mg(2+) as cofactor. It depends on Mn(2+) as a cofactor.

It carries out the reaction D-ribulose 5-phosphate = (2S)-2-hydroxy-3-oxobutyl phosphate + formate + H(+). It functions in the pathway cofactor biosynthesis; riboflavin biosynthesis; 2-hydroxy-3-oxobutyl phosphate from D-ribulose 5-phosphate: step 1/1. Functionally, catalyzes the conversion of D-ribulose 5-phosphate to formate and 3,4-dihydroxy-2-butanone 4-phosphate. This chain is 3,4-dihydroxy-2-butanone 4-phosphate synthase, found in Desulfatibacillum aliphaticivorans.